Reading from the N-terminus, the 32-residue chain is Zinc metalloproteinase/disintegrin-like CdtV1 (32 aa).

Intrachain disulfides connect cysteine 5/cysteine 14 and cysteine 7/cysteine 15.

It belongs to the venom metalloproteinase (M12B) family. P-II subfamily. P-IIa sub-subfamily. As to quaternary structure, monomer. Expressed by the venom gland.

It is found in the secreted. Its function is as follows. Snake venom metalloproteinase that impairs hemostasis in the envenomed animal. This is Zinc metalloproteinase/disintegrin-like CdtV1 from Crotalus durissus terrificus (South American rattlesnake).